Reading from the N-terminus, the 648-residue chain is Chaperone protein HtpG (648 aa).

The a; substrate-binding stretch occupies residues 1 to 349 (MTTEHAAGAQ…SSDLPLNVSR (349 aa)). The tract at residues 350 to 570 (EILQESKDID…EHDVGMNLAR (221 aa)) is b. Residues 571–648 (ILKAAGQQAP…MAMGGSAGTD (78 aa)) form a c region.

It belongs to the heat shock protein 90 family. As to quaternary structure, homodimer.

The protein resides in the cytoplasm. Its function is as follows. Molecular chaperone. Has ATPase activity. This Aromatoleum aromaticum (strain DSM 19018 / LMG 30748 / EbN1) (Azoarcus sp. (strain EbN1)) protein is Chaperone protein HtpG.